A 215-amino-acid polypeptide reads, in one-letter code: MGQKINPLGFRLGATQGHHSLWFAQPKNYSEDLQEDQKIRDCIKNYIKKNMKIFSSVEGIACIEIQKRIDLIQVIIYMGFPKLLIEHQKIEELQMNIQKELNSVNRKLNMAITRIANPYGHPNILAEFIAGQLKNRVSFRKAMKKAIELTEQAGTKGIQIQIAGRIDGKEIARVEWIREGRVPLQTIKAKIDYCSYTVRTIYGALGIKIWIFVDE.

The 74-residue stretch at 43 to 116 (IKNYIKKNMK…KLNMAITRIA (74 aa)) folds into the KH type-2 domain.

This sequence belongs to the universal ribosomal protein uS3 family. In terms of assembly, part of the 30S ribosomal subunit.

It is found in the plastid. Its subcellular location is the chloroplast. The polypeptide is Small ribosomal subunit protein uS3c (rps3) (Morus indica (Mulberry)).